The following is a 178-amino-acid chain: CDP-archaeol synthase (178 aa).

Transmembrane regions (helical) follow at residues 3 to 23 (LLLL…ANAV), 56 to 76 (FFGI…VILY), 91 to 111 (IILS…GSFI), and 136 to 156 (LLFA…LLVI).

It belongs to the CDP-archaeol synthase family. The cofactor is Mg(2+).

It localises to the cell membrane. It catalyses the reaction 2,3-bis-O-(geranylgeranyl)-sn-glycerol 1-phosphate + CTP + H(+) = CDP-2,3-bis-O-(geranylgeranyl)-sn-glycerol + diphosphate. It participates in membrane lipid metabolism; glycerophospholipid metabolism. Functionally, catalyzes the formation of CDP-2,3-bis-(O-geranylgeranyl)-sn-glycerol (CDP-archaeol) from 2,3-bis-(O-geranylgeranyl)-sn-glycerol 1-phosphate (DGGGP) and CTP. This reaction is the third ether-bond-formation step in the biosynthesis of archaeal membrane lipids. This chain is CDP-archaeol synthase, found in Methanococcus maripaludis (strain C5 / ATCC BAA-1333).